The chain runs to 158 residues: Cyclic pyranopterin monophosphate synthase (158 aa).

Substrate-binding positions include 74-76 (MCH) and 112-113 (ME). Asp127 is an active-site residue.

This sequence belongs to the MoaC family. In terms of assembly, homohexamer; trimer of dimers.

It carries out the reaction (8S)-3',8-cyclo-7,8-dihydroguanosine 5'-triphosphate = cyclic pyranopterin phosphate + diphosphate. Its pathway is cofactor biosynthesis; molybdopterin biosynthesis. In terms of biological role, catalyzes the conversion of (8S)-3',8-cyclo-7,8-dihydroguanosine 5'-triphosphate to cyclic pyranopterin monophosphate (cPMP). The sequence is that of Cyclic pyranopterin monophosphate synthase from Helicobacter pylori (strain P12).